The primary structure comprises 356 residues: Putative ankyrin repeat protein R599 (356 aa).

6 ANK repeats span residues Asn-111–Asn-143, Arg-152–Thr-182, His-183–Asp-213, Lys-215–Val-238, Asn-239–Ile-266, and Asn-267–Asn-298.

This is Putative ankyrin repeat protein R599 from Acanthamoeba polyphaga (Amoeba).